The primary structure comprises 2731 residues: Teneurin-1 (2731 aa).

Residues 1-72 form a disordered region; it reads MEQTDCKPYQ…KRKDVEKSTQ (72 aa). Residues 1-318 form the Teneurin N-terminal domain; sequence MEQTDCKPYQ…KPYRCCNWKC (318 aa). Topologically, residues 1–324 are cytoplasmic; sequence MEQTDCKPYQ…NWKCTALSAT (324 aa). Basic and acidic residues predominate over residues 44-55; it reads ETLHEYNQELRR. Residues 62-65 carry the Nuclear localization signal (NLS) motif; sequence RKRK. The residue at position 105 (S105) is a Phosphoserine. T109 is modified (phosphothreonine). At S116 the chain carries Phosphoserine. The disordered stretch occupies residues 175-241; it reads DSAQDMQSSP…PAPPTSTQDS (67 aa). Polar residues predominate over residues 178-189; sequence QDMQSSPHNQFT. Residues 192 to 201 show a composition bias toward pro residues; that stretch reads PLPPPPPPPH. The span at 214 to 224 shows a compositional bias: polar residues; sequence DSLQRRSMTTR. The short motif at 290–297 is the Required for interaction with SORBS1 (Ten-1 ICD form) element; that stretch reads PPPRPLPR. Residues 325–345 traverse the membrane as a helical segment; the sequence is AITVTLALLLAYVIAVHLFGL. The Extracellular portion of the chain corresponds to 346–2731; that stretch reads TWQLQPVGQI…FMRQSEIGRR (2386 aa). N432 carries an N-linked (GlcNAc...) asparagine glycan. 8 consecutive EGF-like domains span residues 527–558, 559–590, 591–623, 624–656, 657–690, 691–720, 721–752, and 760–795; these read IMDDCSTNCNGNGECISGHCHCFPGFLGPDCA, RDSCPVLCGGNGEYEKGHCVCRNGWKGPECDV, PEEQCIDPTCFGHGTCIMGVCICVPGYKGEICE, EEDCLDPMCSSHGICVKGECHCSTGWGGVNCET, PLPICQEQCSGHGTFLLDTGVCSCDPKWTGSDCS, TELCTMECGSHGVCSRGICQCEEGWVGPTC, EERSCHSHCAEHGQCKDGKCECSPGWEGDHCT, and VRDGCPGLCFGNGRCTLDQNGWHCVCQVGWSGTGCN. Intrachain disulfides connect C531–C541, C535–C546, C548–C557, C566–C577, C579–C588, C595–C606, C600–C611, C613–C622, C627–C638, C632–C643, C645–C654, C665–C678, C680–C689, C694–C704, C698–C709, C711–C720, C725–C735, C729–C740, C742–C751, C764–C774, C768–C783, and C785–C794. N-linked (GlcNAc...) asparagine glycosylation is found at N904 and N1083. NHL repeat units lie at residues 1193–1218, 1298–1342, 1357–1408, 1420–1464, and 1487–1530; these read LFAPVALASGPDGSVYVGDFNFVRRI, SHCG…NAVI, LSCD…IAGR, FLVS…VTTN, and CFSG…ISKN. A YD 1 repeat occupies 1540–1559; it reads YEIASPADQELYQFTVNGTH. N1556 and N1573 each carry an N-linked (GlcNAc...) asparagine glycan. YD repeat units follow at residues 1576 to 1596, 1614 to 1638, 1639 to 1660, and 1661 to 1681; these read YNAEGDLGAITSSNGNSVHIR, YWLTISSNGVLKRVSAQGYNLALMT, YPGNTGLLATKSNENGWTTVYE, and YDPEGHLTNATFPTGEVSSFH. N-linked (GlcNAc...) asparagine glycans are attached at residues N1669, N1705, N1743, N1763, N1787, and N1848. 11 YD repeats span residues 1851–1870, 1871–1891, 1892–1910, 1911–1931, 1939–1955, 1956–1975, 1976–1995, 1998–2018, 2021–2041, 2091–2111, and 2119–2139; these read YSPSGLVTFIQRGTWNEKME, YDQSGKIISRTWADGKIWSYT, YLEKSVMLLLHSQRRYIFE, YDQSDCLLSVTMPSMVRHSLQ, YRNIYTPPDSSTSFIQD, YSRDGRLLQTLHLGTGRRVL, YKYTKQARLSEILYDTTQVT, YEESSGVIKTIHLMHDGFICT, YRQTGPLIGRQIFRFSEEGLV, YDLNQVITTTVMKHTKIFNAN, and YEILKAIAYWMTIQYDNMGRM. N-linked (GlcNAc...) asparagine glycosylation is present at N2151. YD repeat units follow at residues 2159 to 2179, 2180 to 2200, 2202 to 2222, 2234 to 2254, and 2256 to 2276; these read YDADGQLQTVSVNDKIQWRYS, YDLNGNINLLSHGNSARLTPL, YDLRDRITRLGEIQYKMDEDG, YNSNGLLQKAYNKVSGWTVQY, and YDGLGRRVASKSSLGQHLQFF. N2291 carries N-linked (GlcNAc...) asparagine glycosylation. YD repeat units lie at residues 2302-2319 and 2320-2343; these read YDLQGHLIAMELSSGEEY and YVACDNMGTPLAVFSSRGQVIKEI. S2586 bears the Phosphoserine mark. N-linked (GlcNAc...) asparagine glycosylation occurs at N2608.

It belongs to the tenascin family. Teneurin subfamily. In terms of assembly, homodimer; disulfide-linked. Heterodimer with either TENM2 or TENM3. May also form heterodimer with TENM4. Ten-1 ICD interacts with SORBS1 (via third SH3 domain). Interacts with MBD1 isoform 2. Ten-1 ICD interacts with HINT1. Post-translationally, once secreted, may also be cleaved to give rise to the TCAP-1 form. Derives from the plasma membrane form by proteolytic processing. Further proteolytic cleavage may generate 11.9 and 4.7 kDa bioactive peptides. Isoform 1 and isoform 2 are expressed in the brain. Isoform 2 is expressed in the granular layer of the dentate gyrus and the pyramidal layer (Py) of the CA1, CA2 and CA3 of the hippocampus (at protein level). Expressed in the cortex, thalamus, CA1, CA2, CA3, dentate gyrus and granular layer of the hippocampus. Weakly expressed in kidney, testis and lung.

It is found in the cell membrane. Its subcellular location is the cytoplasm. The protein resides in the secreted. The protein localises to the nucleus. It localises to the nucleus speckle. It is found in the nucleus matrix. Its subcellular location is the cytoskeleton. Its function is as follows. Involved in neural development, regulating the establishment of proper connectivity within the nervous system. May function as a cellular signal transducer. Functionally, plays a role in the regulation of neuroplasticity in the limbic system. Mediates a rapid reorganization of actin- and tubulin-based cytoskeleton elements with an increase in dendritic arborization and spine density formation of neurons in the hippocampus and amygdala. Induces BDNF transcription inhibition in neurons. Activates the mitogen-activated protein (MAP) kinase 2 (MEK2) and extracellular signal-regulated kinase (ERK) cascade. Also acts as a bioactive neuroprotective peptide on limbic neurons of the brain and regulates stress-induced behavior: attenuates alkalosis-associated necrotic cell death and the effects of corticotropin-releasing factor (CRF) on c-fos/FOS induction and on the reinstatement of cocaine seeking. Induces gene transcription activation. This chain is Teneurin-1 (Tenm1), found in Mus musculus (Mouse).